Consider the following 156-residue polypeptide: Arginine repressor (156 aa).

The protein belongs to the ArgR family.

Its subcellular location is the cytoplasm. It participates in amino-acid biosynthesis; L-arginine biosynthesis [regulation]. In terms of biological role, regulates arginine biosynthesis genes. The protein is Arginine repressor of Shewanella pealeana (strain ATCC 700345 / ANG-SQ1).